A 286-amino-acid chain; its full sequence is Ferric acinetobactin reductase (286 aa).

One can recognise an FAD-binding FR-type domain in the interval 25–131 (MEQLEMTIVS…IGPRPHFIPN (107 aa)). The FAD site is built by R79, V80, T82, D96, V98, H100, D102, S104, A106, R250, G252, and S255.

This sequence belongs to the SIP oxidoreductase family. In terms of assembly, monomer in solution. FAD is required as a cofactor.

It catalyses the reaction 2 a Fe(II)-siderophore + NAD(+) + H(+) = 2 a Fe(III)-siderophore + NADH. It carries out the reaction 2 a Fe(II)-siderophore + NADP(+) + H(+) = 2 a Fe(III)-siderophore + NADPH. In terms of biological role, ferric-siderophore reductase involved in iron removal from the siderophores after their transport into the cell. Interacts with the siderophores acinetobactin (Acb) and preacinetobactin (pre-Acb) and catalyzes the reduction of the ferric iron bound to the siderophores to ferrous iron, resulting in destabilization of the siderophore chelation complex and entrance of ferrous iron into the intracellular pool of bioavailable metals. Can use NADH and NADPH as electron donors in vitro, but the reduction rate is very slow, suggesting that NADH and NADPH are not the physiological partners of BauF. The polypeptide is Ferric acinetobactin reductase (Acinetobacter baumannii).